The following is an 82-amino-acid chain: U1-theraphotoxin-Ct1b (82 aa).

Residues 1-23 (MRTFTLIAILTCALLVIYHAAEA) form the signal peptide. A propeptide spanning residues 24–44 (EELEAKDVIESKALATLDEER) is cleaved from the precursor.

The protein belongs to the neurotoxin 12 (Hwtx-2) family. 03 (juruin) subfamily. In terms of processing, contains 3 disulfide bonds. Two different connectivities are observed in similar proteins (C1-C3, C2-C5, C4-C6 or C1-C4, C2-C5, C3-C6). As to expression, expressed by the venom gland.

Its subcellular location is the secreted. Its function is as follows. This toxin causes paralysis and death to sheep blowflies. It does not target insect sodium channels. The polypeptide is U1-theraphotoxin-Ct1b (Coremiocnemis tropix (Australian tarantula spider)).